We begin with the raw amino-acid sequence, 218 residues long: MNQSSLLAEFGEPITRVENALQALREGRGVLLLDDEDRENEGDIIYSVEHLTNAQMALMIRECSGIVCLCLTDEQANQLELPPMVVDNNSANQTAFTVTIEAKVGVTTGVSAADRVTTIKTAANPTAKPTDLARPGHVFPLRARKGGVLARRGHTEGTVDLMQMAGLQSAGVLCEVTNPDGTMAKAPEIVAFGKMHNMPVLTIEDMVMYRTEFDLKLA.

D-ribulose 5-phosphate-binding positions include 38–39, D43, 151–155, and E175; these read RE and RRGHT. E39 is a binding site for Mg(2+). H154 is a Mg(2+) binding site.

Belongs to the DHBP synthase family. In terms of assembly, homodimer. Requires Mg(2+) as cofactor. Mn(2+) serves as cofactor.

The enzyme catalyses D-ribulose 5-phosphate = (2S)-2-hydroxy-3-oxobutyl phosphate + formate + H(+). Its pathway is cofactor biosynthesis; riboflavin biosynthesis; 2-hydroxy-3-oxobutyl phosphate from D-ribulose 5-phosphate: step 1/1. In terms of biological role, catalyzes the conversion of D-ribulose 5-phosphate to formate and 3,4-dihydroxy-2-butanone 4-phosphate. The chain is 3,4-dihydroxy-2-butanone 4-phosphate synthase from Vibrio atlanticus (strain LGP32) (Vibrio splendidus (strain Mel32)).